Here is a 465-residue protein sequence, read N- to C-terminus: Juvenile hormone epoxide hydrolase 2 (465 aa).

Residues 7–27 (ILWIAIVIGLGVLYYEITKEF) traverse the membrane as a helical segment. Asp-224 (nucleophile) is an active-site residue. The active-site Proton donor is Tyr-370. The active-site Proton acceptor is His-427.

It belongs to the peptidase S33 family.

The protein resides in the microsome membrane. It is found in the endoplasmic reticulum membrane. It carries out the reaction cis-stilbene oxide + H2O = (1R,2R)-hydrobenzoin. The catalysed reaction is 1-(4-methoxyphenyl)-N-methyl-N-[(3-methyloxetan-3-yl)methyl]methanamine + H2O = 2-{[(4-methoxybenzyl)(methyl)amino]methyl}-2-methylpropane-1,3-diol. Its function is as follows. Catalyzes juvenile hormone hydrolysis. The polypeptide is Juvenile hormone epoxide hydrolase 2 (Ctenocephalides felis (Cat flea)).